Reading from the N-terminus, the 159-residue chain is uncharacterized protein (159 aa).

Residues 1-139 (MSRRAPGSRL…RKSQERSMSY (139 aa)) are disordered. Polar residues predominate over residues 9–31 (RLSSGGTNYSRSWNDWQPRTDSA). Residues 65 to 82 (QRHDDTRVHADIQNDEKG) are compositionally biased toward basic and acidic residues. Residues 105-119 (RVNNVTSPEFTSVQH) are compositionally biased toward polar residues. Over residues 125–134 (ATKDMRKSQE) the composition is skewed to basic and acidic residues.

This is an uncharacterized protein from Homo sapiens (Human).